A 225-amino-acid chain; its full sequence is Probable CDP-diacylglycerol--inositol 3-phosphatidyltransferase 2 (225 aa).

2 helical membrane-spanning segments follow: residues Pro6–Leu26 and Ile29–Phe49. Residues Asp52 and Asp55 each contribute to the Mg(2+) site. The a CDP-1,2-diacyl-sn-glycerol site is built by Gly56, Arg60, and Ser66. Mg(2+)-binding residues include Asp73 and Asp77. The active-site Proton acceptor is Asp77. Transmembrane regions (helical) follow at residues Leu84–Leu104, Met143–Ala163, and Leu184–Ile204.

It belongs to the CDP-alcohol phosphatidyltransferase class-I family. The cofactor is Mg(2+). Mn(2+) is required as a cofactor.

It localises to the membrane. The enzyme catalyses a CDP-1,2-diacyl-sn-glycerol + myo-inositol = a 1,2-diacyl-sn-glycero-3-phospho-(1D-myo-inositol) + CMP + H(+). In terms of biological role, catalyzes the biosynthesis of phosphatidylinositol (PtdIns) as well as PtdIns:inositol exchange reaction. May thus act to reduce an excessive cellular PtdIns content. The exchange activity is due to the reverse reaction of PtdIns synthase and is dependent on CMP, which is tightly bound to the enzyme. This Arabidopsis thaliana (Mouse-ear cress) protein is Probable CDP-diacylglycerol--inositol 3-phosphatidyltransferase 2 (PIS2).